A 466-amino-acid polypeptide reads, in one-letter code: MLRSTSTVTLLSGGAARTPGAPSRRANVCRLRLTVPPESPVPEQCEKKIERKEQLLDLSNGEPTRKLPQGVVYGVVRRSDQNQQKEMVVYGWSTSQLKEEMNYIKDVRATLEKVRKRMYGDYDEMRQKIRQLTQELSVSHAQQEYLENHIQTQSSALDRFNAMNSALASDSIGLQKTLVDVTLENSNIKDQIRNLQQTYEASMDKLREKQRQLEVAQVENQLLKMKVESSQEANAEVMREMTKKLYSQYEEKLQEEQRKHSAEKEALLEETNSFLKAIEEANKKMQAAEISLEEKDQRIGELDRLIERMEKERHQLQLQLLEHETEMSGELTDSDKERYQQLEEASASLRERIRHLDDMVHCQQKKVKQMVEEIESLKKKLQQKQLLILQLLEKISFLEGENNELQSRLDYLTETQAKTEVETREIGVGCDLLPSQTGRTREIVMPSRNYTPYTRVLELTMKKTLT.

Residues 1-10 (MLRSTSTVTL) are compositionally biased toward polar residues. Positions 1 to 20 (MLRSTSTVTLLSGGAARTPG) are cleaved as a signal peptide. Residues 1-23 (MLRSTSTVTLLSGGAARTPGAPS) are disordered. 2 coiled-coil regions span residues 96-142 (QLKE…SHAQ) and 174-418 (LQKT…TQAK). A Required for DYNLL1-binding motif is present at residues 424 to 425 (RE).

Belongs to the MYZAP family. As to quaternary structure, interacts with DSP, MPRIP and TJP1/ZO1. Interaction with MPRIP inhibits the activation of transcription factor SRF. Interacts with GRIN1. Interacts with DYNLL1. As to expression, detected in heart, liver, skeletal muscle, placenta, small intestine, lung, prostate and testis. Expressed in arrector pili muscle (at protein level).

The protein localises to the cytoplasm. It localises to the cytoskeleton. Its subcellular location is the cell membrane. It is found in the myofibril. The protein resides in the sarcomere. The protein localises to the i band. It localises to the z line. Its subcellular location is the cell junction. Its function is as follows. Plays a role in cellular signaling via Rho-related GTP-binding proteins and subsequent activation of transcription factor SRF. Targets TJP1 to cell junctions. In cortical neurons, may play a role in glutaminergic signal transduction through interaction with the NMDA receptor subunit GRIN1. This chain is Myocardial zonula adherens protein (MYZAP), found in Homo sapiens (Human).